Consider the following 194-residue polypeptide: uncharacterized protein (194 aa).

2 consecutive CBS domains span residues 13–72 and 78–133; these read MSFP…PKDV and MSKK…LLEI. In terms of domain architecture, ACP-type MB spans 159-192; it reads YINGICENCGYQGRVRLYQGRYLCDECIEEFEEK. 4 residues coordinate Fe cation: Cys-164, Cys-167, Cys-182, and Cys-185. Zn(2+)-binding residues include Cys-164, Cys-167, Cys-182, and Cys-185.

This is an uncharacterized protein from Methanocaldococcus jannaschii (strain ATCC 43067 / DSM 2661 / JAL-1 / JCM 10045 / NBRC 100440) (Methanococcus jannaschii).